A 202-amino-acid chain; its full sequence is tRNA (guanine-N(7)-)-methyltransferase (202 aa).

S-adenosyl-L-methionine is bound by residues glutamate 34, glutamate 59, aspartate 86, and aspartate 107. The active site involves aspartate 107. Substrate contacts are provided by residues lysine 111, aspartate 143, and 181–184 (TDYE).

Belongs to the class I-like SAM-binding methyltransferase superfamily. TrmB family.

It catalyses the reaction guanosine(46) in tRNA + S-adenosyl-L-methionine = N(7)-methylguanosine(46) in tRNA + S-adenosyl-L-homocysteine. Its pathway is tRNA modification; N(7)-methylguanine-tRNA biosynthesis. In terms of biological role, catalyzes the formation of N(7)-methylguanine at position 46 (m7G46) in tRNA. The protein is tRNA (guanine-N(7)-)-methyltransferase of Metamycoplasma hominis (strain ATCC 23114 / DSM 25592 / NBRC 14850 / NCTC 10111 / PG21) (Mycoplasma hominis).